We begin with the raw amino-acid sequence, 457 residues long: MFKTLYARIAIYSITVILFSALISFVLTNVYYHYNLKASNDAKIMKTLKEARQYEQSAKPTHIQQYFKHLGQMNYQIMTVDQKGHKTFYGEPFREDTLSQNAINNVLNNKDYHGIKDKPFALFVTGFFDNVTDNTVGINFKTKDGSIAVFMRPDIGETFSEFRTFLAVLLMLLLFISISLVIASTYSIIRPVKKLKLATERLIDGDFETPIKQTRKDEIGTLQYHFNKMRESLGQVDQMRQHFVQNVSHEIKTPLTHIHHLLSELQQTSDKTLRQQYINDIYTITTQLSGLTTELLLLSELDNHQHLLFDDKIQVDQLIKDIIRHEQFAADEKSLIILADLESINFLGNQRLLHQALSNLLINAIKYTDVGGAIDIALQHSHNNIIFTISNDGSPISPQAEARLFERFYKVSKHDNSNGLGLAITKSIIELHHGTIQFTQSNEYVTTFTITLPNNSH.

The next 2 membrane-spanning stretches (helical) occupy residues 9 to 29 (IAIYSITVILFSALISFVLTN) and 164 to 184 (TFLAVLLMLLLFISISLVIAS). In terms of domain architecture, HAMP spans 186-238 (YSIIRPVKKLKLATERLIDGDFETPIKQTRKDEIGTLQYHFNKMRESLGQVDQ). Residues 246-456 (NVSHEIKTPL…TFTITLPNNS (211 aa)) enclose the Histidine kinase domain. The residue at position 249 (His-249) is a Phosphohistidine; by autocatalysis.

Autophosphorylated.

Its subcellular location is the cell membrane. It catalyses the reaction ATP + protein L-histidine = ADP + protein N-phospho-L-histidine.. In terms of biological role, member of the two-component regulatory system HssS/HssR involved in intracellular heme homeostasis and tempering of staphylococcal virulence. HssS functions as a heme sensor histidine kinase which is autophosphorylated at a histidine residue and transfers its phosphate group to an aspartate residue of HssR. HssR/HssS activates the expression of hrtAB, an efflux pump, in response to extracellular heme, hemin, hemoglobin or blood. The polypeptide is Heme sensor protein HssS (hssS) (Staphylococcus aureus (strain Mu3 / ATCC 700698)).